The sequence spans 295 residues: Lipase 2 (295 aa).

A signal peptide spans 1-31 (MPKPALRRVMTATVAAVGTLALGLTDATAHA). The active-site Nucleophile is the serine 48. 3 disulfides stabilise this stretch: cysteine 65–cysteine 89, cysteine 138–cysteine 152, and cysteine 205–cysteine 254. Residue histidine 275 is part of the active site.

Belongs to the 'GDSL' lipolytic enzyme family. In terms of assembly, monomer.

The protein localises to the secreted. It catalyses the reaction a triacylglycerol + H2O = a diacylglycerol + a fatty acid + H(+). With respect to regulation, strongly inhibited by Ag(+). The cations Ca(2+) and Mg(2+) do not significantly reduce the lipolytic activity of SCO7513, whereas high concentrations of Co(2+) and Cu(2+) partially inhibit it. Is not inhibited by DTT in vitro. Is resistant to PMSF inhibition, except in the presence of Ca(2+). Functionally, catalyzes the hydrolysis of fatty acid esters with a preference for long chain fatty acids (C16-C18). This is Lipase 2 from Streptomyces coelicolor (strain ATCC BAA-471 / A3(2) / M145).